A 335-amino-acid chain; its full sequence is Probable geranylgeranyl transferase type-2 subunit beta (335 aa).

5 PFTB repeats span residues 74–115 (TEEI…IIFN), 122–163 (ADTI…HLLG), 170–211 (IDSA…AIAG), 218–259 (RDRT…AILG), and 266–312 (SDAM…DDTL). Residues 196–198 (HSG) and 238–250 (RPEKLPDVCYSWW) contribute to the geranylgeranyl diphosphate site. 3 residues coordinate Zn(2+): D244, C246, and H296.

Belongs to the protein prenyltransferase subunit beta family. In terms of assembly, heterodimer of an alpha and a beta subunit. Requires Zn(2+) as cofactor.

It carries out the reaction geranylgeranyl diphosphate + L-cysteinyl-[protein] = S-geranylgeranyl-L-cysteinyl-[protein] + diphosphate. Its function is as follows. Catalyzes the transfer of a geranyl-geranyl moiety from geranyl-geranyl pyrophosphate to both cysteines in Rab proteins with an -XXCC, -XCXC and -CCXX C-terminal. The chain is Probable geranylgeranyl transferase type-2 subunit beta (ggtb-1) from Caenorhabditis elegans.